A 313-amino-acid polypeptide reads, in one-letter code: Adhesin MafA 2 (313 aa).

A signal peptide spans 1–14 (MKTLLLLIPLVLTA). Cys15 carries the N-palmitoyl cysteine lipid modification. Cys15 carries S-diacylglycerol cysteine lipidation. Residues 282–297 (GDTTAQNRPDFKQNNG) show a composition bias toward polar residues. Positions 282–313 (GDTTAQNRPDFKQNNGKKPDVGNEVIRRRKGG) are disordered.

Belongs to the MafA family.

It localises to the cell outer membrane. The polypeptide is Adhesin MafA 2 (mafA2) (Neisseria meningitidis serogroup C / serotype 2a (strain ATCC 700532 / DSM 15464 / FAM18)).